We begin with the raw amino-acid sequence, 127 residues long: MSDITKEQVVEFIAGMTVLELSEFIKELEEKFGVSAAAPVAAMAAAPAEAAAPAEEEKTEFDVILKSPGANKIAVIKVVRALTGLGLKEAKEKVDGTPSTLKEAVSKDDAEEAAKQLKEAGAEVEVK.

Positions 96–127 (GTPSTLKEAVSKDDAEEAAKQLKEAGAEVEVK) are disordered. A compositionally biased stretch (basic and acidic residues) spans 104–127 (AVSKDDAEEAAKQLKEAGAEVEVK).

This sequence belongs to the bacterial ribosomal protein bL12 family. In terms of assembly, homodimer. Part of the ribosomal stalk of the 50S ribosomal subunit. Forms a multimeric L10(L12)X complex, where L10 forms an elongated spine to which 2 to 4 L12 dimers bind in a sequential fashion. Binds GTP-bound translation factors.

Forms part of the ribosomal stalk which helps the ribosome interact with GTP-bound translation factors. Is thus essential for accurate translation. This is Large ribosomal subunit protein bL12 from Oleidesulfovibrio alaskensis (strain ATCC BAA-1058 / DSM 17464 / G20) (Desulfovibrio alaskensis).